Consider the following 374-residue polypeptide: Alcohol dehydrogenase 1 (374 aa).

Ser1 is subject to N-acetylserine. Zn(2+) contacts are provided by Cys46, His67, Cys97, Cys100, Cys103, Cys111, and Cys174. Residues 199-204 (GLGGVG), Asp223, Lys228, 292-294 (VGV), and Arg369 each bind NAD(+).

It belongs to the zinc-containing alcohol dehydrogenase family. Class-I subfamily. In terms of assembly, homodimer. Zn(2+) serves as cofactor.

It localises to the cytoplasm. It carries out the reaction a primary alcohol + NAD(+) = an aldehyde + NADH + H(+). The enzyme catalyses a secondary alcohol + NAD(+) = a ketone + NADH + H(+). In Struthio camelus (Common ostrich), this protein is Alcohol dehydrogenase 1 (ADH1).